The primary structure comprises 172 residues: FMN reductase (NADH) RutF 2 (172 aa).

This sequence belongs to the non-flavoprotein flavin reductase family. RutF subfamily.

The catalysed reaction is FMNH2 + NAD(+) = FMN + NADH + 2 H(+). Catalyzes the reduction of FMN to FMNH2 which is used to reduce pyrimidine by RutA via the Rut pathway. In Methylorubrum extorquens (strain PA1) (Methylobacterium extorquens), this protein is FMN reductase (NADH) RutF 2.